We begin with the raw amino-acid sequence, 641 residues long: Chaperone protein DnaK (641 aa).

The residue at position 200 (T200) is a Phosphothreonine; by autocatalysis. The segment covering 606 to 623 (AEQGGNADAASGNAQASK) has biased composition (low complexity). The interval 606 to 628 (AEQGGNADAASGNAQASKAADDV) is disordered.

The protein belongs to the heat shock protein 70 family.

Its function is as follows. Acts as a chaperone. This Xanthomonas axonopodis pv. citri (strain 306) protein is Chaperone protein DnaK.